The sequence spans 579 residues: YTH domain-containing family protein 2 (579 aa).

Residues 1–45 (MSASSLLEQRPKGQGNKVQNGSVHQKDGLNDDDFEPYLSPQARPN) are disordered. An N-acetylserine modification is found at Ser-2. A phosphoserine mark is found at Ser-2, Ser-4, Ser-5, Ser-22, Ser-39, and Ser-196. The localization to mRNA processing bodies (P-bodies) stretch occupies residues 2-384 (SASSLLEQRP…QAGSGSTPSE (383 aa)). Positions 247-387 (AKQQPKLKTK…SGSTPSEPHP (141 aa)) are disordered. A compositionally biased stretch (polar residues) spans 291 to 316 (ALVQNIGQPTQGSPQPVGQQANNSPP). Residues 337–349 (AQLSVQQQAAQPT) show a composition bias toward low complexity. Ser-359 bears the Phosphoserine mark. Over residues 359–371 (SGFGHNGVDGNGV) the composition is skewed to gly residues. The segment covering 372–383 (GQSQAGSGSTPS) has biased composition (polar residues). An interaction with m6A-containing mRNAs region spans residues 385 to 579 (PHPVLEKLRS…VKKERQGRGK (195 aa)). The residue at position 394 (Ser-394) is a Phosphoserine. In terms of domain architecture, YTH spans 410–544 (GRVFIIKSYS…EKAKQVLKII (135 aa)). Residues 416–418 (KSY), Asp-422, 432–433 (WC), Asn-462, Trp-486, and Trp-491 contribute to the RNA site.

It belongs to the YTHDF family. YTHDF2 subfamily. Interacts with CNOT1; interaction is direct and promotes recruitment of the CCR4-NOT complex. Interacts with YTHDF3. Interacts with RIDA/HRSP12; interaction leads to recruitment of the ribonuclease P/MRP complex. Post-translationally, ubiquitinated by the SCF(SKP2) complex, leading to its degradation. As to expression, highly expressed in induced pluripotent stem cells (iPSCs) and down-regulated during neural differentiation.

It localises to the cytoplasm. Its subcellular location is the cytosol. The protein resides in the P-body. It is found in the stress granule. The protein localises to the nucleus. In terms of biological role, specifically recognizes and binds N6-methyladenosine (m6A)-containing RNAs, and regulates their stability. M6A is a modification present at internal sites of mRNAs and some non-coding RNAs and plays a role in mRNA stability and processing. Acts as a regulator of mRNA stability by promoting degradation of m6A-containing mRNAs via interaction with the CCR4-NOT and ribonuclease P/MRP complexes, depending on the context. The YTHDF paralogs (YTHDF1, YTHDF2 and YTHDF3) share m6A-containing mRNAs targets and act redundantly to mediate mRNA degradation and cellular differentiation. M6A-containing mRNAs containing a binding site for RIDA/HRSP12 (5'-GGUUC-3') are preferentially degraded by endoribonucleolytic cleavage: cooperative binding of RIDA/HRSP12 and YTHDF2 to transcripts leads to recruitment of the ribonuclease P/MRP complex. Other m6A-containing mRNAs undergo deadenylation via direct interaction between YTHDF2 and CNOT1, leading to recruitment of the CCR4-NOT and subsequent deadenylation of m6A-containing mRNAs. Required maternally to regulate oocyte maturation: probably acts by binding to m6A-containing mRNAs, thereby regulating maternal transcript dosage during oocyte maturation, which is essential for the competence of oocytes to sustain early zygotic development. Also required during spermatogenesis: regulates spermagonial adhesion by promoting degradation of m6A-containing transcripts coding for matrix metallopeptidases. Also involved in hematopoietic stem cells specification by binding to m6A-containing mRNAs, leading to promote their degradation. Also acts as a regulator of neural development by promoting m6A-dependent degradation of neural development-related mRNA targets. Inhibits neural specification of induced pluripotent stem cells by binding to methylated neural-specific mRNAs and promoting their degradation, thereby restraining neural differentiation. Regulates circadian regulation of hepatic lipid metabolism: acts by promoting m6A-dependent degradation of PPARA transcripts. Regulates the innate immune response to infection by inhibiting the type I interferon response: acts by binding to m6A-containing IFNB transcripts and promoting their degradation. May also act as a promoter of cap-independent mRNA translation following heat shock stress: upon stress, relocalizes to the nucleus and specifically binds mRNAs with some m6A methylation mark at their 5'-UTR, protecting demethylation of mRNAs by FTO, thereby promoting cap-independent mRNA translation. Regulates mitotic entry by promoting the phase-specific m6A-dependent degradation of WEE1 transcripts. Promotes formation of phase-separated membraneless compartments, such as P-bodies or stress granules, by undergoing liquid-liquid phase separation upon binding to mRNAs containing multiple m6A-modified residues: polymethylated mRNAs act as a multivalent scaffold for the binding of YTHDF proteins, juxtaposing their disordered regions and thereby leading to phase separation. The resulting mRNA-YTHDF complexes then partition into different endogenous phase-separated membraneless compartments, such as P-bodies, stress granules or neuronal RNA granules. May also recognize and bind RNAs modified by C5-methylcytosine (m5C) and act as a regulator of rRNA processing. (Microbial infection) Promotes viral gene expression and replication of polyomavirus SV40: acts by binding to N6-methyladenosine (m6A)-containing viral RNAs. Functionally, (Microbial infection) Promotes viral gene expression and virion production of kaposis sarcoma-associated herpesvirus (KSHV) at some stage of the KSHV life cycle (in iSLK.219 and iSLK.BAC16 cells). Acts by binding to N6-methyladenosine (m6A)-containing viral RNAs. The chain is YTH domain-containing family protein 2 from Homo sapiens (Human).